The primary structure comprises 331 residues: tRNA N6-adenosine threonylcarbamoyltransferase (331 aa).

Residues His-108 and His-112 each coordinate Fe cation. Substrate-binding positions include 129–133, Asp-161, Glu-178, and Ser-258; that span reads LVSGG. Residue Asp-286 coordinates Fe cation.

The protein belongs to the KAE1 / TsaD family. Requires Fe(2+) as cofactor.

It is found in the cytoplasm. The catalysed reaction is L-threonylcarbamoyladenylate + adenosine(37) in tRNA = N(6)-L-threonylcarbamoyladenosine(37) in tRNA + AMP + H(+). Its function is as follows. Required for the formation of a threonylcarbamoyl group on adenosine at position 37 (t(6)A37) in tRNAs that read codons beginning with adenine. Is probably involved in the transfer of the threonylcarbamoyl moiety of threonylcarbamoyl-AMP (TC-AMP) to the N6 group of A37. The polypeptide is tRNA N6-adenosine threonylcarbamoyltransferase (Caldivirga maquilingensis (strain ATCC 700844 / DSM 13496 / JCM 10307 / IC-167)).